A 335-amino-acid polypeptide reads, in one-letter code: Pyridoxal 5'-phosphate synthase subunit PdxS (335 aa).

D30 contacts D-ribose 5-phosphate. The active-site Schiff-base intermediate with D-ribose 5-phosphate is K87. G159 contacts D-ribose 5-phosphate. R171 is a D-glyceraldehyde 3-phosphate binding site. Residues G257 and 278–279 (GS) contribute to the D-ribose 5-phosphate site.

It belongs to the PdxS/SNZ family. As to quaternary structure, in the presence of PdxT, forms a dodecamer of heterodimers.

The enzyme catalyses aldehydo-D-ribose 5-phosphate + D-glyceraldehyde 3-phosphate + L-glutamine = pyridoxal 5'-phosphate + L-glutamate + phosphate + 3 H2O + H(+). Its pathway is cofactor biosynthesis; pyridoxal 5'-phosphate biosynthesis. Its function is as follows. Catalyzes the formation of pyridoxal 5'-phosphate from ribose 5-phosphate (RBP), glyceraldehyde 3-phosphate (G3P) and ammonia. The ammonia is provided by the PdxT subunit. Can also use ribulose 5-phosphate and dihydroxyacetone phosphate as substrates, resulting from enzyme-catalyzed isomerization of RBP and G3P, respectively. The polypeptide is Pyridoxal 5'-phosphate synthase subunit PdxS (Thermococcus gammatolerans (strain DSM 15229 / JCM 11827 / EJ3)).